We begin with the raw amino-acid sequence, 666 residues long: tRNA 5-methylaminomethyl-2-thiouridine biosynthesis bifunctional protein MnmC (666 aa).

The tract at residues 1–245 (MKQYAIQPAT…KREMLCGVME (245 aa)) is tRNA (mnm(5)s(2)U34)-methyltransferase. The interval 270 to 666 (IGGGIASALL…RKLLKGKAVK (397 aa)) is FAD-dependent cmnm(5)s(2)U34 oxidoreductase.

This sequence in the N-terminal section; belongs to the methyltransferase superfamily. tRNA (mnm(5)s(2)U34)-methyltransferase family. It in the C-terminal section; belongs to the DAO family. The cofactor is FAD.

Its subcellular location is the cytoplasm. The catalysed reaction is 5-aminomethyl-2-thiouridine(34) in tRNA + S-adenosyl-L-methionine = 5-methylaminomethyl-2-thiouridine(34) in tRNA + S-adenosyl-L-homocysteine + H(+). Catalyzes the last two steps in the biosynthesis of 5-methylaminomethyl-2-thiouridine (mnm(5)s(2)U) at the wobble position (U34) in tRNA. Catalyzes the FAD-dependent demodification of cmnm(5)s(2)U34 to nm(5)s(2)U34, followed by the transfer of a methyl group from S-adenosyl-L-methionine to nm(5)s(2)U34, to form mnm(5)s(2)U34. The polypeptide is tRNA 5-methylaminomethyl-2-thiouridine biosynthesis bifunctional protein MnmC (Salmonella typhi).